Reading from the N-terminus, the 173-residue chain is Bifunctional protein PyrR (173 aa).

Residues 93 to 105 (VILVDDVLYTGRT) carry the PRPP-binding motif.

It belongs to the purine/pyrimidine phosphoribosyltransferase family. PyrR subfamily. Homodimer and homohexamer; in equilibrium.

It carries out the reaction UMP + diphosphate = 5-phospho-alpha-D-ribose 1-diphosphate + uracil. Functionally, regulates transcriptional attenuation of the pyrimidine nucleotide (pyr) operon by binding in a uridine-dependent manner to specific sites on pyr mRNA. This disrupts an antiterminator hairpin in the RNA and favors formation of a downstream transcription terminator, leading to a reduced expression of downstream genes. Its function is as follows. Also displays a weak uracil phosphoribosyltransferase activity which is not physiologically significant. In Streptococcus uberis (strain ATCC BAA-854 / 0140J), this protein is Bifunctional protein PyrR.